The following is a 339-amino-acid chain: NmrA-like family domain-containing oxidoreductase notA (339 aa).

Residues 13–18, 39–43, 60–61, 81–83, lysine 140, and 164–167 each bind NADP(+); these read GATGAQ, RKPDS, DG, TNS, and YMGI.

This sequence belongs to the NmrA-type oxidoreductase family.

In terms of biological role, nmrA-like family domain-containing oxidoreductase; part of the gene cluster that mediates the biosynthesis of notoamide, a fungal indole alkaloid that belongs to a family of natural products containing a characteristic bicyclo[2.2.2]diazaoctane core. The first step of notoamide biosynthesis involves coupling of L-proline and L-tryptophan by the bimodular NRPS notE, to produce cyclo-L-tryptophan-L-proline called brevianamide F. The reverse prenyltransferase notF then acts as a deoxybrevianamide E synthase and converts brevianamide F to deoxybrevianamide E via reverse prenylation at C-2 of the indole ring leading to the bicyclo[2.2.2]diazaoctane core. Deoxybrevianamide E is further hydroxylated at C-6 of the indole ring, likely catalyzed by the cytochrome P450 monooxygenase notG, to yield 6-hydroxy-deoxybrevianamide E. 6-hydroxy-deoxybrevianamide E is a specific substrate of the prenyltransferase notC for normal prenylation at C-7 to produce 6-hydroxy-7-prenyl-deoxybrevianamide, also called notoamide S. As the proposed pivotal branching point in notoamide biosynthesis, notoamide S can be diverted to notoamide E through an oxidative pyran ring closure putatively catalyzed by either notH cytochrome P450 monooxygenase or the notD FAD-linked oxidoreductase. This step would be followed by an indole 2,3-epoxidation-initiated pinacol-like rearrangement catalyzed by the notB FAD-dependent monooxygenase leading to the formation of notoamide C and notoamide D. On the other hand notoamide S is converted to notoamide T by notH (or notD), a bifunctional oxidase that also functions as the intramolecular Diels-Alderase responsible for generation of (+)-notoamide T. To generate antipodal (-)-notoaminide T, notH' (or notD') in Aspergillus versicolor is expected to catalyze a Diels-Alder reaction leading to the opposite stereochemistry. The remaining oxidoreductase notD (or notH) likely catalyzes the oxidative pyran ring formation to yield (+)-stephacidin A. The FAD-dependent monooxygenase notI is highly similar to notB and is predicted to catalyze a similar conversion from (+)-stephacidin A to (-)-notoamide B via the 2,3-epoxidation of (+)-stephacidin A followed by a pinacol-type rearrangement. Finally, it remains unclear which enzyme could be responsible for the final hydroxylation steps leading to notoamide A and sclerotiamide. The sequence is that of NmrA-like family domain-containing oxidoreductase notA from Aspergillus sp. (strain MF297-2).